Consider the following 538-residue polypeptide: Syncytin-1 (538 aa).

The N-terminal stretch at 1 to 20 (MALPYHIFLFTVLLPSFTLT) is a signal peptide. The Extracellular portion of the chain corresponds to 21–443 (APPPCRCMTS…NTGPWGLLSQ (423 aa)). N-linked (GlcNAc...) asparagine glycosylation is present at Asn169. Residues 186 to 189 (CWIC) carry the CXXC motif. Cystine bridges form between Cys186–Cys189, Cys186–Cys405, and Cys397–Cys404. N-linked (GlcNAc...) asparagine glycosylation is found at Asn208, Asn214, Asn234, Asn242, and Asn281. The interval 320 to 340 (ILPFVIGAGVLGALGTGIGGI) is fusion peptide. The immunosuppression stretch occupies residues 380 to 396 (LQNRRALDLLTAERGGT). The CX6CC signature appears at 397–406 (CLFLGEECCY). The N-linked (GlcNAc...) asparagine glycan is linked to Asn409. Residues 444–464 (WMPWILPFLGPLAAIILLLLF) form a helical membrane-spanning segment. An essential for the fusiogenic function region spans residues 465 to 484 (GPCIFNLLVNFVSSRIEAVK). The Cytoplasmic portion of the chain corresponds to 465–538 (GPCIFNLLVN…LLRPNSAGSS (74 aa)). The tract at residues 496–538 (KIYRRPLDRPASPRSDVNDIKGTPPEEISAAQPLLRPNSAGSS) is disordered.

This sequence belongs to the gamma type-C retroviral envelope protein family. HERV class-I W env subfamily. In terms of assembly, the mature envelope protein (Env) consists of a trimer of SU-TM heterodimers attached probably by a labile interchain disulfide bond. Interacts with the C-type lectin CD209/DC-SIGN. In terms of processing, specific enzymatic cleavages in vivo yield mature proteins. Envelope glycoproteins are synthesized as an inactive precursor that is heavily N-glycosylated and processed likely by furin in the Golgi to yield the mature SU and TM proteins. The cleavage site between SU and TM requires the minimal sequence [KR]-X-[KR]-R. The intracytoplasmic tail cleavage by the viral protease that is required for the fusiogenic activity of some retroviruses envelope proteins seems to have been lost during evolution. Post-translationally, the CXXC motif is highly conserved across a broad range of retroviral envelope proteins. It is thought to participate in the formation of a labile disulfide bond possibly with the CX6CC motif present in the transmembrane protein. Isomerization of the intersubunit disulfide bond to an SU intrachain disulfide bond is thought to occur upon receptor recognition in order to allow membrane fusion. Expressed at higher level in placental syncytiotrophoblast. Expressed at intermediate level in testis. Seems also to be found at low level in adrenal tissue, bone marrow, breast, colon, kidney, ovary, prostate, skin, spleen, thymus, thyroid, brain and trachea. Both mRNA and protein levels are significantly increased in the brain of individuals with multiple sclerosis, particularly in astrocytes and microglia.

It localises to the cell membrane. Its subcellular location is the virion. In terms of biological role, this endogenous retroviral envelope protein has retained its original fusogenic properties and participates in trophoblast fusion and the formation of a syncytium during placenta morphogenesis. May induce fusion through binding of SLC1A4 and SLC1A5. Its function is as follows. Endogenous envelope proteins may have kept, lost or modified their original function during evolution. Retroviral envelope proteins mediate receptor recognition and membrane fusion during early infection. The surface protein (SU) mediates receptor recognition, while the transmembrane protein (TM) acts as a class I viral fusion protein. The protein may have at least 3 conformational states: pre-fusion native state, pre-hairpin intermediate state, and post-fusion hairpin state. During viral and target cell membrane fusion, the coiled coil regions (heptad repeats) assume a trimer-of-hairpins structure, positioning the fusion peptide in close proximity to the C-terminal region of the ectodomain. The formation of this structure appears to drive apposition and subsequent fusion of membranes. The polypeptide is Syncytin-1 (ERVW-1) (Homo sapiens (Human)).